The chain runs to 154 residues: Mediator of RNA polymerase II transcription subunit 21 (154 aa).

Positions 37–71 are disordered; the sequence is GFERTGSQTPQQQVHQQQQLPQQQQQQQQPQQQED. A compositionally biased stretch (low complexity) spans 44-71; it reads QTPQQQVHQQQQLPQQQQQQQQPQQQED. A coiled-coil region spans residues 96-140; sequence SEESSIELQVQSLQRLEAENKESAEKLEEIVRKGELLLEKIQAAL.

Belongs to the Mediator complex subunit 21 family. As to quaternary structure, component of the Mediator complex.

It is found in the nucleus. Functionally, component of the Mediator complex, a coactivator involved in the regulated transcription of nearly all RNA polymerase II-dependent genes. Mediator functions as a bridge to convey information from gene-specific regulatory proteins to the basal RNA polymerase II transcription machinery. Mediator is recruited to promoters by direct interactions with regulatory proteins and serves as a scaffold for the assembly of a functional preinitiation complex with RNA polymerase II and the general transcription factors. This chain is Mediator of RNA polymerase II transcription subunit 21 (MED21), found in Anopheles gambiae (African malaria mosquito).